The chain runs to 115 residues: DNA-binding protein STK_13740 (115 aa).

Belongs to the PDCD5 family.

The polypeptide is DNA-binding protein STK_13740 (Sulfurisphaera tokodaii (strain DSM 16993 / JCM 10545 / NBRC 100140 / 7) (Sulfolobus tokodaii)).